The chain runs to 96 residues: Protein Vpr (96 aa).

A homooligomerization region spans residues M1–L42. A phosphoserine; by host mark is found at S79, S94, and S96.

Belongs to the HIV-1 VPR protein family. As to quaternary structure, homooligomer, may form homodimer. Interacts with p6-gag region of the Pr55 Gag precursor protein through a (Leu-X-X)4 motif near the C-terminus of the P6gag protein. Interacts with host UNG. May interact with host RAD23A/HHR23A. Interacts with host VPRBP/DCAF1, leading to hijack the CUL4A-RBX1-DDB1-DCAF1/VPRBP complex, mediating ubiquitination of host proteins such as TERT and ZGPAT and arrest of the cell cycle in G2 phase. Phosphorylated on several residues by host. These phosphorylations regulate VPR activity for the nuclear import of the HIV-1 pre-integration complex.

The protein localises to the virion. The protein resides in the host nucleus. It localises to the host extracellular space. During virus replication, may deplete host UNG protein, and incude G2-M cell cycle arrest. Acts by targeting specific host proteins for degradation by the 26S proteasome, through association with the cellular CUL4A-DDB1 E3 ligase complex by direct interaction with host VPRPB/DCAF-1. Cell cycle arrest reportedly occurs within hours of infection and is not blocked by antiviral agents, suggesting that it is initiated by the VPR carried into the virion. Additionally, VPR induces apoptosis in a cell cycle dependent manner suggesting that these two effects are mechanistically linked. Detected in the serum and cerebrospinal fluid of AIDS patient, VPR may also induce cell death to bystander cells. Functionally, during virus entry, plays a role in the transport of the viral pre-integration (PIC) complex to the host nucleus. This function is crucial for viral infection of non-dividing macrophages. May act directly at the nuclear pore complex, by binding nucleoporins phenylalanine-glycine (FG)-repeat regions. This Human immunodeficiency virus type 1 group M subtype C (isolate 92BR025) (HIV-1) protein is Protein Vpr.